Reading from the N-terminus, the 484-residue chain is MKHSGGNQACYVLGQKTPSIRDLYSLGHKLGQGQFGTTYMCKEISTGREYACKSITKRKLISKEDVEDVRREIQIMHHLAGYKNIVTIKGAYEDPLYVHIVMELCSGGELFDRIIQRGHYSERKAAELIKIIVGVVEACHSLGVMHRDLKPENFLLVNKDDDFSLKAIDFGLSVFFKPGQIFEDVVGSPYYVAPEVLLKHYGPEADVWTAGVILYILVSGVPPFWAETQQGIFDAVLKGHIDFDSDPWPLISDSAKNLIRGMLCSRPSERLTAHQVLRHPWICENGVAPDRALDPAVLSRLKQFSAMNKLKQMALRVIAESLSEEEIAGLKEMFKAMDTDNSGAITFDELKAGLRRYGSTLKDTEIRDLMEAADIDKSGTIDYGEFIAATIHLNKLEREEHLLSAFRYFDKDGSGYITIDELQHACAEQGMSDVFLEDVIKEVDQDNDGRIDYGEFVAMMQKGIVGRTMRKSINMSIRNNAVSQ.

The 259-residue stretch at 24-282 (YSLGHKLGQG…AHQVLRHPWI (259 aa)) folds into the Protein kinase domain. Residues 30–38 (LGQGQFGTT) and lysine 53 each bind ATP. Aspartate 148 (proton acceptor) is an active-site residue. Serine 188 is modified (phosphoserine). An autoinhibitory domain region spans residues 288-318 (APDRALDPAVLSRLKQFSAMNKLKQMALRVI). 4 consecutive EF-hand domains span residues 325–360 (EEIA…YGST), 361–396 (LKDT…LNKL), 397–432 (EREE…QGMS), and 436–466 (LEDV…GIVG). Ca(2+) contacts are provided by aspartate 338, aspartate 340, serine 342, glutamate 349, aspartate 374, aspartate 376, serine 378, threonine 380, glutamate 385, aspartate 410, aspartate 412, serine 414, tyrosine 416, glutamate 421, aspartate 444, aspartate 446, aspartate 448, arginine 450, and glutamate 455.

The protein belongs to the protein kinase superfamily. Ser/Thr protein kinase family. CDPK subfamily.

The catalysed reaction is L-seryl-[protein] + ATP = O-phospho-L-seryl-[protein] + ADP + H(+). It catalyses the reaction L-threonyl-[protein] + ATP = O-phospho-L-threonyl-[protein] + ADP + H(+). With respect to regulation, activated by calcium. Autophosphorylation may play an important role in the regulation of the kinase activity. Functionally, may play a role in signal transduction pathways that involve calcium as a second messenger. The protein is Calcium-dependent protein kinase 26 (CPK26) of Arabidopsis thaliana (Mouse-ear cress).